Consider the following 439-residue polypeptide: GTPase Obg (439 aa).

The region spanning 4 to 162 (IEFIDVVDIY…KHIQLELKLL (159 aa)) is the Obg domain. The OBG-type G domain maps to 163–336 (ADVGLIGYPN…LKYAMWDIIK (174 aa)). GTP is bound by residues 169–176 (GYPNVGKS), 194–198 (FTTLV), 218–221 (DIPG), 288–291 (NKSD), and 317–319 (SAV). Mg(2+)-binding residues include S176 and T196. The region spanning 361-439 (LVLPDRVDIK…VEGVDFIFKE (79 aa)) is the OCT domain.

This sequence belongs to the TRAFAC class OBG-HflX-like GTPase superfamily. OBG GTPase family. As to quaternary structure, monomer. Mg(2+) serves as cofactor.

It localises to the cytoplasm. Its function is as follows. An essential GTPase which binds GTP, GDP and possibly (p)ppGpp with moderate affinity, with high nucleotide exchange rates and a fairly low GTP hydrolysis rate. Plays a role in control of the cell cycle, stress response, ribosome biogenesis and in those bacteria that undergo differentiation, in morphogenesis control. The chain is GTPase Obg from Fervidobacterium nodosum (strain ATCC 35602 / DSM 5306 / Rt17-B1).